Consider the following 553-residue polypeptide: Undecaprenyl phosphate-alpha-4-amino-4-deoxy-L-arabinose arabinosyl transferase (553 aa).

Transmembrane regions (helical) follow at residues 8–28, 83–103, 111–131, 132–152, 176–196, 204–224, 255–275, 288–308, 317–337, 350–370, 380–400, and 407–427; these read LVLLLGFTLLYLLPLEFRALW, VRFGAVFSTTLSALMVAWLAF, VAVLSGVIFLTCLLVYGVGTY, AVLDPMITLWLVAAMCSFWLG, VMTKGFLALAVPVLGVLPWVI, VLLFGPLAIISATLITLPWAL, APFWYYIPFLIAGCLPWVALL, IESGTLYLLGWVVMPLLFFSI, ILPCFAPLAILLARHATQLVA, TVFGAVCALIVLLVLAPWGIA, VLKVIQASIAFLVWALVGYLT, and LWQWAALCPLGIALLVGGMIP.

Belongs to the glycosyltransferase 83 family.

The protein resides in the cell inner membrane. The catalysed reaction is 4-amino-4-deoxy-alpha-L-arabinopyranosyl di-trans,octa-cis-undecaprenyl phosphate + lipid IVA = lipid IIA + di-trans,octa-cis-undecaprenyl phosphate.. It functions in the pathway lipopolysaccharide metabolism; 4-amino-4-deoxy-beta-L-arabinose-lipid A biosynthesis. In terms of biological role, catalyzes the transfer of the L-Ara4N moiety of the glycolipid undecaprenyl phosphate-alpha-L-Ara4N to lipid A. The modified arabinose is attached to lipid A and is required for resistance to polymyxin and cationic antimicrobial peptides. The protein is Undecaprenyl phosphate-alpha-4-amino-4-deoxy-L-arabinose arabinosyl transferase of Enterobacter sp. (strain 638).